The primary structure comprises 720 residues: Polyribonucleotide nucleotidyltransferase (720 aa).

2 residues coordinate Mg(2+): D487 and D493. In terms of domain architecture, KH spans 554–613 (PRIETFKIPTDKIREVIGTGGKVIREIVEKTGAKVNIEDDGTVKVASSDGEAMKAAIKWI). The region spanning 623 to 691 (GQIYDGTVVK…DRGKTRLSMK (69 aa)) is the S1 motif domain. Positions 699 to 720 (EDLEAKDKVAEGEKAPREAAGE) are disordered. A compositionally biased stretch (basic and acidic residues) spans 701-720 (LEAKDKVAEGEKAPREAAGE).

Belongs to the polyribonucleotide nucleotidyltransferase family. Requires Mg(2+) as cofactor.

It localises to the cytoplasm. It carries out the reaction RNA(n+1) + phosphate = RNA(n) + a ribonucleoside 5'-diphosphate. Its function is as follows. Involved in mRNA degradation. Catalyzes the phosphorolysis of single-stranded polyribonucleotides processively in the 3'- to 5'-direction. The polypeptide is Polyribonucleotide nucleotidyltransferase (Bradyrhizobium diazoefficiens (strain JCM 10833 / BCRC 13528 / IAM 13628 / NBRC 14792 / USDA 110)).